The following is a 198-amino-acid chain: KinB-signaling pathway activation protein (198 aa).

6 consecutive transmembrane segments (helical) span residues 9–29, 42–62, 90–110, 117–137, 146–166, and 173–193; these read FFFS…FALK, AGQI…FSVI, LQLF…FLFF, LAGY…TAYI, TFVS…FPAL, and WLYL…LMLP.

It localises to the cell membrane. Functionally, involved in the activation of the KinB signaling pathway of sporulation. This is KinB-signaling pathway activation protein (kbaA) from Bacillus subtilis (strain 168).